We begin with the raw amino-acid sequence, 101 residues long: UPF0358 protein EF_2458 (101 aa).

This sequence belongs to the UPF0358 family.

In Enterococcus faecalis (strain ATCC 700802 / V583), this protein is UPF0358 protein EF_2458.